Reading from the N-terminus, the 159-residue chain is Transcription elongation factor GreA (159 aa).

The stretch at 44–75 (SENAEYDAAREQQSQTEARIADLENKLSTATI) forms a coiled coil.

Belongs to the GreA/GreB family.

Its function is as follows. Necessary for efficient RNA polymerase transcription elongation past template-encoded arresting sites. The arresting sites in DNA have the property of trapping a certain fraction of elongating RNA polymerases that pass through, resulting in locked ternary complexes. Cleavage of the nascent transcript by cleavage factors such as GreA or GreB allows the resumption of elongation from the new 3'terminus. GreA releases sequences of 2 to 3 nucleotides. In Chlorobium limicola (strain DSM 245 / NBRC 103803 / 6330), this protein is Transcription elongation factor GreA.